Reading from the N-terminus, the 57-residue chain is Major exported protein (57 aa).

Belongs to the hcp1 family. In terms of assembly, homodimer.

The protein resides in the secreted. In Pseudomonas syringae pv. ribicola, this protein is Major exported protein.